The sequence spans 957 residues: Exoribonuclease II, mitochondrial (957 aa).

The N-terminal 54 residues, 1 to 54, are a transit peptide targeting the mitochondrion; it reads MNYRQLFLLQNVNLESNYLLKRVCLSLKLSPCKLTRKFHHACPSSSKVLKYFRI. An RNB domain is found at 503-843; it reads RVDLRHLKAF…FTHHQIQSVL (341 aa).

This sequence belongs to the RNR ribonuclease family.

It localises to the mitochondrion. The catalysed reaction is Exonucleolytic cleavage in the 3'- to 5'-direction to yield nucleoside 5'-phosphates.. Required for intron-independent turnover and processing of mitochondrial RNA. Participates in 3'-mtRNA processing where it hydrolyzes single-stranded RNA or partially double-stranded RNA with 3'-single-stranded tails. The chain is Exoribonuclease II, mitochondrial (rpm1) from Schizosaccharomyces pombe (strain 972 / ATCC 24843) (Fission yeast).